A 300-amino-acid polypeptide reads, in one-letter code: 33 kDa chaperonin (300 aa).

Cystine bridges form between Cys-247/Cys-249 and Cys-280/Cys-283.

This sequence belongs to the HSP33 family. Under oxidizing conditions two disulfide bonds are formed involving the reactive cysteines. Under reducing conditions zinc is bound to the reactive cysteines and the protein is inactive.

It is found in the cytoplasm. Its function is as follows. Redox regulated molecular chaperone. Protects both thermally unfolding and oxidatively damaged proteins from irreversible aggregation. Plays an important role in the bacterial defense system toward oxidative stress. The chain is 33 kDa chaperonin from Prochlorococcus marinus (strain MIT 9312).